A 140-amino-acid chain; its full sequence is Nucleoside diphosphate kinase (140 aa).

ATP-binding residues include Lys11, Phe59, Arg87, Thr93, Arg104, and Asn114. His117 (pros-phosphohistidine intermediate) is an active-site residue.

Belongs to the NDK family. As to quaternary structure, homotetramer. Mg(2+) is required as a cofactor.

The protein resides in the cytoplasm. It carries out the reaction a 2'-deoxyribonucleoside 5'-diphosphate + ATP = a 2'-deoxyribonucleoside 5'-triphosphate + ADP. It catalyses the reaction a ribonucleoside 5'-diphosphate + ATP = a ribonucleoside 5'-triphosphate + ADP. Functionally, major role in the synthesis of nucleoside triphosphates other than ATP. The ATP gamma phosphate is transferred to the NDP beta phosphate via a ping-pong mechanism, using a phosphorylated active-site intermediate. This is Nucleoside diphosphate kinase from Rickettsia typhi (strain ATCC VR-144 / Wilmington).